The following is a 553-amino-acid chain: uncharacterized protein (553 aa).

Transmembrane regions (helical) follow at residues A13–L30, G37–I59, S69–F91, L98–T120, and T157–L179. RCK C-terminal domains are found at residues L190–E273 and K281–N365. 6 helical membrane-spanning segments follow: residues L375 to G397, V402 to L424, L436 to F458, L468 to F490, F497 to L514, and A529 to F551.

It belongs to the AAE transporter (TC 2.A.81) family.

The protein resides in the cell membrane. This is an uncharacterized protein from Bacteroides fragilis (strain YCH46).